Reading from the N-terminus, the 131-residue chain is Lymphocyte antigen 6C2 (131 aa).

The signal sequence occupies residues 1–26 (MDSTHATKSCLLILLVALLCAGRAQG). Residues 27–116 (LQCYECYGVP…TAGSTWTMAG (90 aa)) form the UPAR/Ly6 domain. 5 disulfide bridges follow: Cys29–Cys53, Cys32–Cys41, Cys46–Cys74, Cys78–Cys95, and Cys96–Cys101. Gly109 carries the GPI-anchor amidated glycine lipid modification. The propeptide at 110 to 131 (STWTMAGVLLFSLSSVILQTLL) is removed in mature form.

The protein resides in the cell membrane. The chain is Lymphocyte antigen 6C2 (Ly6c2) from Mus musculus (Mouse).